Reading from the N-terminus, the 347-residue chain is MIIAVDVDGGDYAPKEIIKGALKAAQEYKIGLILLGKKEVIHVHAGHYLKKLPIEIVHCPQTVTFNEHAVEAIKGKPQSAIVIGTSLVKQGKADAFISAGNTGAVLAAAFFILGKIDGVERPALGAIITTRPHIPSLLIDAGANAECRPNHLDEFAHLGNIYAKQVLGLENPRIGLLNNGEEEAKGTKLTLETHQLLKKSKLNFIGNIEGHDISLNKADVIVTDGFTGNIVLKTLEGLGDALLKVRKVGHAIDSAAHLRGRALLADVGLGSMVKGMDFEECGGACLLGVKGTIIVAHGRSHARAIKNAIGLAKRTAEKGVDKLIAEDIKSRTKAGTEGDPKNVNTPV.

This sequence belongs to the PlsX family. As to quaternary structure, homodimer. Probably interacts with PlsY.

The protein resides in the cytoplasm. It catalyses the reaction a fatty acyl-[ACP] + phosphate = an acyl phosphate + holo-[ACP]. Its pathway is lipid metabolism; phospholipid metabolism. Catalyzes the reversible formation of acyl-phosphate (acyl-PO(4)) from acyl-[acyl-carrier-protein] (acyl-ACP). This enzyme utilizes acyl-ACP as fatty acyl donor, but not acyl-CoA. This Dehalococcoides mccartyi (strain ATCC BAA-2100 / JCM 16839 / KCTC 5957 / BAV1) protein is Phosphate acyltransferase.